The chain runs to 585 residues: Aspartate--tRNA(Asp/Asn) ligase (585 aa).

Position 173 (Glu173) interacts with L-aspartate. Positions 197 to 200 are aspartate; that stretch reads QLFK. Position 219 (Arg219) interacts with L-aspartate. ATP contacts are provided by residues 219–221 and Gln228; that span reads RDE. Residue His447 coordinates L-aspartate. Glu477 contacts ATP. An L-aspartate-binding site is contributed by Arg484. Residue 529 to 532 participates in ATP binding; that stretch reads GFDR.

The protein belongs to the class-II aminoacyl-tRNA synthetase family. Type 1 subfamily. Homodimer.

The protein resides in the cytoplasm. The catalysed reaction is tRNA(Asx) + L-aspartate + ATP = L-aspartyl-tRNA(Asx) + AMP + diphosphate. Aspartyl-tRNA synthetase with relaxed tRNA specificity since it is able to aspartylate not only its cognate tRNA(Asp) but also tRNA(Asn). Reaction proceeds in two steps: L-aspartate is first activated by ATP to form Asp-AMP and then transferred to the acceptor end of tRNA(Asp/Asn). This is Aspartate--tRNA(Asp/Asn) ligase from Campylobacter concisus (strain 13826).